We begin with the raw amino-acid sequence, 890 residues long: Translation initiation factor IF-2 (890 aa).

A disordered region spans residues 45-303; it reads LIDHLNQKNS…SLQQGFQKPA (259 aa). A compositionally biased stretch (polar residues) spans 67-81; that stretch reads STLNIPGTGGKSKSV. The span at 92–217 shows a compositional bias: basic and acidic residues; the sequence is VKRDPQEAER…RMAEENKWTD (126 aa). The span at 252–266 shows a compositional bias: basic residues; the sequence is GRGRNAKAARPKKGN. Residues 267–280 show a composition bias toward basic and acidic residues; the sequence is KHAESKADREEARA. Positions 389 to 558 constitute a tr-type G domain; it reads PRAPVVTIMG…LLQAEVLELK (170 aa). Residues 398 to 405 form a G1 region; the sequence is GHVDHGKT. 398-405 lines the GTP pocket; the sequence is GHVDHGKT. The interval 423 to 427 is G2; the sequence is GITQH. Positions 444–447 are G3; sequence DTPG. GTP is bound by residues 444–448 and 498–501; these read DTPGH and NKID. Residues 498–501 form a G4 region; that stretch reads NKID. Residues 534–536 are G5; that stretch reads SAK. Lys-808 carries the post-translational modification N6-acetyllysine.

Belongs to the TRAFAC class translation factor GTPase superfamily. Classic translation factor GTPase family. IF-2 subfamily.

The protein resides in the cytoplasm. Functionally, one of the essential components for the initiation of protein synthesis. Protects formylmethionyl-tRNA from spontaneous hydrolysis and promotes its binding to the 30S ribosomal subunits. Also involved in the hydrolysis of GTP during the formation of the 70S ribosomal complex. In Shigella boydii serotype 18 (strain CDC 3083-94 / BS512), this protein is Translation initiation factor IF-2.